The sequence spans 186 residues: Ribosome-recycling factor (186 aa).

The protein belongs to the RRF family.

It is found in the cytoplasm. Responsible for the release of ribosomes from messenger RNA at the termination of protein biosynthesis. May increase the efficiency of translation by recycling ribosomes from one round of translation to another. In Ralstonia nicotianae (strain ATCC BAA-1114 / GMI1000) (Ralstonia solanacearum), this protein is Ribosome-recycling factor.